The sequence spans 106 residues: Valine dehydrogenase (106 aa).

Lys91 is an active-site residue.

It belongs to the Glu/Leu/Phe/Val dehydrogenases family. Homodimer.

It localises to the cytoplasm. It catalyses the reaction L-valine + NAD(+) + H2O = 3-methyl-2-oxobutanoate + NH4(+) + NADH + H(+). It functions in the pathway amino-acid degradation; L-valine degradation. Its function is as follows. Oxidative deamination of branched-chain amino acids. The catabolism of valine is the major source of fatty acid precursors for macrolide biosynthesis and a vital source of antibiotic precursors. The polypeptide is Valine dehydrogenase (vdh) (Streptomyces ambofaciens).